The sequence spans 159 residues: Ethylene-responsive transcription factor ERF069 (159 aa).

2 disordered regions span residues 1-36 (MKRI…KKLV) and 128-159 (DAPT…EEVV). Positions 74–134 (KFRGVRQRPW…IGPDAPTNFG (61 aa)) form a DNA-binding region, AP2/ERF. The span at 136 to 148 (PDVDSAVVKKQDS) shows a compositional bias: basic and acidic residues.

It belongs to the AP2/ERF transcription factor family. ERF subfamily.

The protein resides in the nucleus. Functionally, probably acts as a transcriptional activator. Binds to the GCC-box pathogenesis-related promoter element. May be involved in the regulation of gene expression by stress factors and by components of stress signal transduction pathways. In Arabidopsis thaliana (Mouse-ear cress), this protein is Ethylene-responsive transcription factor ERF069 (ERF069).